A 189-amino-acid chain; its full sequence is Thermostable direct hemolysin (189 aa).

A signal peptide spans 1 to 24; sequence MKYQYFAKKSFLFISMLAAFKTFA. Cys-175 and Cys-185 are disulfide-bonded.

It belongs to the TDH hemolysin family. Homodimer.

Bacterial hemolysins are exotoxins that attack blood cell membranes and cause cell rupture by mechanisms not clearly defined. The sequence is that of Thermostable direct hemolysin (tdh) from Vibrio mimicus.